Reading from the N-terminus, the 223-residue chain is Large ribosomal subunit protein uL6c (223 aa).

Residues M1 to C41 constitute a chloroplast transit peptide.

It belongs to the universal ribosomal protein uL6 family. As to quaternary structure, part of the 50S ribosomal subunit.

The protein resides in the plastid. The protein localises to the chloroplast. In terms of biological role, this protein binds directly to 23S ribosomal RNA and is located at the aminoacyl-tRNA binding site of the peptidyltransferase center. This is Large ribosomal subunit protein uL6c (RPL6) from Arabidopsis thaliana (Mouse-ear cress).